A 333-amino-acid polypeptide reads, in one-letter code: MSKQRKLTEADVTPESVFYQRRKVLQALGITAASLALPHNAQADLLSWFKGNDRPKAPPGKPLEFSKPAAWQAQLDLTPEDKVTGYNNFYEFGLDKADPAANAGGLKTEGWQVRIDGEVAKPITLDIDDLIKRFPLEQRIYRMRCVEAWSMVVPWIGFELGKLIKFAEPNSNARYVAFQTLYDPEQMPGQKDRFIGGGLKYPYVEGLRLDEAMNPLALLTVGVYGKTLPPQNGAPLRLITPWKYGFKGIKSIVHIRLVRDQPPTTWNQSAPNEYGFYANVNPHVDHPRWSQATERFIGSGGILDVKRQPTLLFNGYAEQVASLYRGLDLRENF.

The segment at residues 1–43 (MSKQRKLTEADVTPESVFYQRRKVLQALGITAASLALPHNAQA) is a signal peptide (tat-type signal). Mo-molybdopterin is bound by residues N87, 90-91 (YE), C145, T180, N232, R237, and 248-250 (GIK).

The protein belongs to the MsrP family. In terms of assembly, heterodimer of a catalytic subunit (MsrP) and a heme-binding subunit (MsrQ). Mo-molybdopterin is required as a cofactor. Post-translationally, predicted to be exported by the Tat system. The position of the signal peptide cleavage has not been experimentally proven.

The protein localises to the periplasm. The catalysed reaction is L-methionyl-[protein] + a quinone + H2O = L-methionyl-(S)-S-oxide-[protein] + a quinol. The enzyme catalyses L-methionyl-[protein] + a quinone + H2O = L-methionyl-(R)-S-oxide-[protein] + a quinol. Its function is as follows. Part of the MsrPQ system that repairs oxidized periplasmic proteins containing methionine sulfoxide residues (Met-O), using respiratory chain electrons. Thus protects these proteins from oxidative-stress damage caused by reactive species of oxygen and chlorine generated by the host defense mechanisms. MsrPQ is essential for the maintenance of envelope integrity under bleach stress, rescuing a wide series of structurally unrelated periplasmic proteins from methionine oxidation. The catalytic subunit MsrP is non-stereospecific, being able to reduce both (R-) and (S-) diastereoisomers of methionine sulfoxide. This is Protein-methionine-sulfoxide reductase catalytic subunit MsrP from Serratia proteamaculans (strain 568).